The primary structure comprises 259 residues: Pimeloyl-[acyl-carrier protein] methyl ester esterase (259 aa).

Residues 15 to 242 (HLVLLHGWGL…AAHAPFISHP (228 aa)) form the AB hydrolase-1 domain. Residues Trp22, 82-83 (SL), and 143-147 (FLALQ) contribute to the substrate site. Ser82 serves as the catalytic Nucleophile. Residues Asp207 and His235 contribute to the active site. His235 is a substrate binding site.

The protein belongs to the AB hydrolase superfamily. Carboxylesterase BioH family. As to quaternary structure, monomer.

It localises to the cytoplasm. It carries out the reaction 6-carboxyhexanoyl-[ACP] methyl ester + H2O = 6-carboxyhexanoyl-[ACP] + methanol + H(+). It functions in the pathway cofactor biosynthesis; biotin biosynthesis. In terms of biological role, the physiological role of BioH is to remove the methyl group introduced by BioC when the pimeloyl moiety is complete. It allows to synthesize pimeloyl-ACP via the fatty acid synthetic pathway through the hydrolysis of the ester bonds of pimeloyl-ACP esters. This Cronobacter sakazakii (strain ATCC BAA-894) (Enterobacter sakazakii) protein is Pimeloyl-[acyl-carrier protein] methyl ester esterase.